The following is a 357-amino-acid chain: Popeye domain-containing protein 1 (357 aa).

Residues Met-1–His-38 lie on the Extracellular side of the membrane. Asn-20 and Asn-27 each carry an N-linked (GlcNAc...) asparagine glycan. Residues His-39–Leu-59 form a helical membrane-spanning segment. Residues Asn-60–His-62 are Cytoplasmic-facing. A helical membrane pass occupies residues Met-63 to Leu-83. The Extracellular segment spans residues Tyr-84–Asp-89. The chain crosses the membrane as a helical span at residues Ile-90–Tyr-110. The Cytoplasmic portion of the chain corresponds to Lys-111–Pro-357. The span at Gly-309–Pro-323 shows a compositional bias: low complexity. A disordered region spans residues Gly-309–Pro-357. Residues Ser-347–Pro-357 are compositionally biased toward basic and acidic residues.

It belongs to the popeye family. Homodimer. Homodimerization requires the C-terminus cytoplasmic region. In terms of tissue distribution, expressed in the heart and skeletal muscle (at protein level). Isoform 1 and isoform 4: expressed in heart, muscle, brain, stomach, kidney, lung and spleen.

It localises to the lateral cell membrane. The protein localises to the cell junction. The protein resides in the tight junction. Its subcellular location is the membrane. It is found in the cell membrane. It localises to the sarcolemma. The protein localises to the caveola. Functionally, cell adhesion molecule involved in the establishment and/or maintenance of cell integrity. Involved in the formation and regulation of the tight junction (TJ) paracellular permeability barrier in epithelial cells. Induces primordial adhesive contact and aggregation of epithelial cells in a Ca(2+)-independent manner. Involved in epithelial movement during corneal sheet formation and regeneration. May play a role in VAMP3-mediated vesicular transport and recycling of receptor molecules. May play a role in the regulation of cell shape and movement by modulating the Rho-GTPase activity. May be involved in skeletal muscle and heart development as well as in the maintenance of heart function. May also be involved in striated muscle regeneration and in the regulation of cell spreading. This is Popeye domain-containing protein 1 (POPDC1) from Gallus gallus (Chicken).